Reading from the N-terminus, the 224-residue chain is Urease accessory protein UreF (224 aa).

The protein belongs to the UreF family. UreD, UreF and UreG form a complex that acts as a GTP-hydrolysis-dependent molecular chaperone, activating the urease apoprotein by helping to assemble the nickel containing metallocenter of UreC. The UreE protein probably delivers the nickel.

Its subcellular location is the cytoplasm. Functionally, required for maturation of urease via the functional incorporation of the urease nickel metallocenter. This is Urease accessory protein UreF from Methylorubrum populi (strain ATCC BAA-705 / NCIMB 13946 / BJ001) (Methylobacterium populi).